We begin with the raw amino-acid sequence, 330 residues long: MHHQSVLHSGYFHPLLRSWQTAASTVSASNLIYPIFVTDVPDDVQPIASLPGVARYGVNQLEEMLRPLVEAGLRCVLIFGVPSRVPKDEQGSAADSEDSPTIEAVRLLRKTFPSLLVACDVCLCPYTSHGHCGLLSENGAFLAEESRQRLAEVALAYAKAGCQVVAPSDMMDGRVEAIKAALLKHGLGNRVSVMSYSAKFASCFYGPFRDAAQSSPAFGDRRCYQLPPGARGLALRAVARDIQEGADMLMVKPGLPYLDMVREVKDKHPELPLAVYQVSGEFAMLWHGAQAGAFDLRTAVLETMTAFRRAGADIIITYFAPQLLKWLKEE.

Positions 122, 124, 131, and 132 each coordinate Zn(2+). K199 functions as the Schiff-base intermediate with substrate in the catalytic mechanism. N6-succinyllysine is present on K199. 5-aminolevulinate is bound at residue R209. S215 is subject to Phosphoserine. R221 is a 5-aminolevulinate binding site. C223 contacts Zn(2+). The active-site Schiff-base intermediate with substrate is the K252. Position 252 is an N6-succinyllysine (K252). Residues S279 and Y318 each contribute to the 5-aminolevulinate site.

This sequence belongs to the ALAD family. Homooctamer; active form. Homohexamer; low activity form. It depends on Zn(2+) as a cofactor.

The protein localises to the cytoplasm. It is found in the cytosol. The enzyme catalyses 2 5-aminolevulinate = porphobilinogen + 2 H2O + H(+). Its pathway is porphyrin-containing compound metabolism; protoporphyrin-IX biosynthesis; coproporphyrinogen-III from 5-aminolevulinate: step 1/4. Can alternate between a fully active homooctamer and a low-activity homohexamer. A bound magnesium ion may promote the assembly of the fully active homooctamer. The magnesium-binding site is absent in the low-activity homohexamer. Inhibited by compounds that favor the hexameric state. Inhibited by divalent lead ions. The lead ions partially displace the zinc cofactor. Catalyzes an early step in the biosynthesis of tetrapyrroles. Binds two molecules of 5-aminolevulinate per subunit, each at a distinct site, and catalyzes their condensation to form porphobilinogen. In Mus musculus (Mouse), this protein is Delta-aminolevulinic acid dehydratase (Alad).